The chain runs to 210 residues: Large ribosomal subunit protein uL3 (210 aa).

Residues 131 to 165 (GPMSHGSKYHRRVGSMGATTDPGRTFKGKKMPGRM) are disordered.

This sequence belongs to the universal ribosomal protein uL3 family. In terms of assembly, part of the 50S ribosomal subunit. Forms a cluster with proteins L14 and L19.

Functionally, one of the primary rRNA binding proteins, it binds directly near the 3'-end of the 23S rRNA, where it nucleates assembly of the 50S subunit. The chain is Large ribosomal subunit protein uL3 from Caldanaerobacter subterraneus subsp. tengcongensis (strain DSM 15242 / JCM 11007 / NBRC 100824 / MB4) (Thermoanaerobacter tengcongensis).